The sequence spans 274 residues: Imidazole glycerol phosphate synthase subunit HisF (274 aa).

Residues Asp11 and Asp134 contribute to the active site.

Belongs to the HisA/HisF family. Heterodimer of HisH and HisF.

The protein localises to the cytoplasm. It carries out the reaction 5-[(5-phospho-1-deoxy-D-ribulos-1-ylimino)methylamino]-1-(5-phospho-beta-D-ribosyl)imidazole-4-carboxamide + L-glutamine = D-erythro-1-(imidazol-4-yl)glycerol 3-phosphate + 5-amino-1-(5-phospho-beta-D-ribosyl)imidazole-4-carboxamide + L-glutamate + H(+). It participates in amino-acid biosynthesis; L-histidine biosynthesis; L-histidine from 5-phospho-alpha-D-ribose 1-diphosphate: step 5/9. Its function is as follows. IGPS catalyzes the conversion of PRFAR and glutamine to IGP, AICAR and glutamate. The HisF subunit catalyzes the cyclization activity that produces IGP and AICAR from PRFAR using the ammonia provided by the HisH subunit. The sequence is that of Imidazole glycerol phosphate synthase subunit HisF from Methanobrevibacter smithii (strain ATCC 35061 / DSM 861 / OCM 144 / PS).